A 423-amino-acid chain; its full sequence is Tegument protein UL43 (423 aa).

Over residues 1-12 the composition is skewed to polar residues; it reads MEKTPAETTAVS. Positions 1-46 are disordered; it reads MEKTPAETTAVSAGNVPRDSIPCITNVSADTRGRTRPSRPATVPQR.

The protein belongs to the herpesviridae US22 family.

The protein resides in the virion tegument. In Homo sapiens (Human), this protein is Tegument protein UL43 (UL43).